Reading from the N-terminus, the 450-residue chain is Benzene 1,2-dioxygenase subunit alpha (450 aa).

The region spanning tryptophan 54–alanine 163 is the Rieske domain. [2Fe-2S] cluster-binding residues include cysteine 96, histidine 98, cysteine 116, and histidine 119. 2 residues coordinate Fe cation: histidine 222 and histidine 228.

This sequence belongs to the bacterial ring-hydroxylating dioxygenase alpha subunit family. This dioxygenase system consists of four proteins: the two subunits of the hydroxylase component (BnzA and BnzB), a ferredoxin (BnzC) and a ferredoxin reductase (BnzD). The cofactor is [2Fe-2S] cluster. Requires Fe cation as cofactor.

The catalysed reaction is benzene + NADH + O2 + H(+) = cis-1,2-dihydrobenzene-1,2-diol + NAD(+). It catalyses the reaction toluene + NADH + O2 + H(+) = (1S,2R)-3-methylcyclohexa-3,5-diene-1,2-diol + NAD(+). It participates in aromatic compound metabolism; benzene degradation; catechol from benzene: step 1/2. It functions in the pathway xenobiotic degradation; toluene degradation. Its pathway is xenobiotic degradation; xylene degradation. In terms of biological role, catalyzes both the oxidation of benzene and toluene. The protein is Benzene 1,2-dioxygenase subunit alpha (bnzA) of Pseudomonas putida (strain ATCC 700007 / DSM 6899 / JCM 31910 / BCRC 17059 / LMG 24140 / F1).